The chain runs to 25 residues: FRLDEEFQGPIASQVRRQFLFRPRN.

Pyrrolidone carboxylic acid is present on glutamine 18. Asparagine 25 is subject to Asparagine amide.

The protein belongs to the NmU family.

It is found in the secreted. Stimulates uterine smooth muscle contraction and causes selective vasoconstriction. The chain is Neuromedin-U-25 (NMU) from Canis lupus familiaris (Dog).